The primary structure comprises 232 residues: Malate dehydrogenase (232 aa).

Asp-4 serves as a coordination point for NAD(+). Residues Arg-51 and Arg-57 each contribute to the substrate site. Residues Asn-64 and 87-89 (ITN) each bind NAD(+). The substrate site is built by Asn-89 and Arg-123. The active-site Proton acceptor is the His-147. Position 197 (Met-197) interacts with NAD(+).

It belongs to the LDH/MDH superfamily. MDH type 1 family. Homodimer.

The catalysed reaction is (S)-malate + NAD(+) = oxaloacetate + NADH + H(+). Its function is as follows. Catalyzes the reversible oxidation of malate to oxaloacetate. In Klebsiella variicola, this protein is Malate dehydrogenase (mdh).